Consider the following 1070-residue polypeptide: DNA-directed RNA polymerase subunit beta (1070 aa).

The protein belongs to the RNA polymerase beta chain family. In plastids the minimal PEP RNA polymerase catalytic core is composed of four subunits: alpha, beta, beta', and beta''. When a (nuclear-encoded) sigma factor is associated with the core the holoenzyme is formed, which can initiate transcription.

The protein resides in the plastid. The protein localises to the chloroplast. It carries out the reaction RNA(n) + a ribonucleoside 5'-triphosphate = RNA(n+1) + diphosphate. DNA-dependent RNA polymerase catalyzes the transcription of DNA into RNA using the four ribonucleoside triphosphates as substrates. The sequence is that of DNA-directed RNA polymerase subunit beta from Liriodendron tulipifera (Tuliptree).